A 545-amino-acid polypeptide reads, in one-letter code: Chaperonin GroEL (545 aa).

ATP-binding positions include Thr-30–Pro-33, Lys-51, Asp-87–Thr-91, Gly-415, and Asp-495.

Belongs to the chaperonin (HSP60) family. As to quaternary structure, forms a cylinder of 14 subunits composed of two heptameric rings stacked back-to-back. Interacts with the co-chaperonin GroES.

Its subcellular location is the cytoplasm. It catalyses the reaction ATP + H2O + a folded polypeptide = ADP + phosphate + an unfolded polypeptide.. Functionally, together with its co-chaperonin GroES, plays an essential role in assisting protein folding. The GroEL-GroES system forms a nano-cage that allows encapsulation of the non-native substrate proteins and provides a physical environment optimized to promote and accelerate protein folding. The sequence is that of Chaperonin GroEL from Shewanella baltica (strain OS155 / ATCC BAA-1091).